We begin with the raw amino-acid sequence, 208 residues long: N-(5'-phosphoribosyl)anthranilate isomerase (208 aa).

Belongs to the TrpF family.

It catalyses the reaction N-(5-phospho-beta-D-ribosyl)anthranilate = 1-(2-carboxyphenylamino)-1-deoxy-D-ribulose 5-phosphate. The protein operates within amino-acid biosynthesis; L-tryptophan biosynthesis; L-tryptophan from chorismate: step 3/5. The polypeptide is N-(5'-phosphoribosyl)anthranilate isomerase (Neisseria gonorrhoeae (strain ATCC 700825 / FA 1090)).